Here is a 628-residue protein sequence, read N- to C-terminus: Chaperone protein DnaK (628 aa).

Thr174 is subject to Phosphothreonine; by autocatalysis. Residues Ala589–Val628 form a disordered region. Gly residues predominate over residues Gly591–Met605.

This sequence belongs to the heat shock protein 70 family.

In terms of biological role, acts as a chaperone. In Lachnospira eligens (strain ATCC 27750 / DSM 3376 / VPI C15-48 / C15-B4) (Eubacterium eligens), this protein is Chaperone protein DnaK.